Here is a 250-residue protein sequence, read N- to C-terminus: Small ribosomal subunit protein uS2 (250 aa).

This sequence belongs to the universal ribosomal protein uS2 family.

The protein is Small ribosomal subunit protein uS2 of Variovorax paradoxus (strain S110).